Reading from the N-terminus, the 76-residue chain is Small ribosomal subunit protein bS18 (76 aa).

This sequence belongs to the bacterial ribosomal protein bS18 family. Part of the 30S ribosomal subunit. Forms a tight heterodimer with protein bS6.

Functionally, binds as a heterodimer with protein bS6 to the central domain of the 16S rRNA, where it helps stabilize the platform of the 30S subunit. This Azotobacter vinelandii (strain DJ / ATCC BAA-1303) protein is Small ribosomal subunit protein bS18.